The chain runs to 28 residues: Ranatuerin-2SEc (28 aa).

Residues cysteine 23 and cysteine 28 are joined by a disulfide bond.

Expressed by the skin glands.

The protein resides in the secreted. Its function is as follows. Mast cell degranulating peptide. Causes histamine release from rat peritoneal mast cells in vitro. Has antibacterial activity against the Gram-negative bacterium E.coli K12 and Gram-positive bacterium M.luteus NCT C2665. The sequence is that of Ranatuerin-2SEc from Lithobates sevosus (Dusky gopher frog).